The following is a 675-amino-acid chain: UvrABC system protein B (675 aa).

Positions glutamate 32–valine 417 constitute a Helicase ATP-binding domain. Glycine 45–threonine 52 lines the ATP pocket. The short motif at tyrosine 98–isoleucine 121 is the Beta-hairpin element. A Helicase C-terminal domain is found at glutamine 436–isoleucine 602. The UVR domain occupies isoleucine 634–asparagine 669.

It belongs to the UvrB family. Forms a heterotetramer with UvrA during the search for lesions. Interacts with UvrC in an incision complex.

Its subcellular location is the cytoplasm. In terms of biological role, the UvrABC repair system catalyzes the recognition and processing of DNA lesions. A damage recognition complex composed of 2 UvrA and 2 UvrB subunits scans DNA for abnormalities. Upon binding of the UvrA(2)B(2) complex to a putative damaged site, the DNA wraps around one UvrB monomer. DNA wrap is dependent on ATP binding by UvrB and probably causes local melting of the DNA helix, facilitating insertion of UvrB beta-hairpin between the DNA strands. Then UvrB probes one DNA strand for the presence of a lesion. If a lesion is found the UvrA subunits dissociate and the UvrB-DNA preincision complex is formed. This complex is subsequently bound by UvrC and the second UvrB is released. If no lesion is found, the DNA wraps around the other UvrB subunit that will check the other stand for damage. The sequence is that of UvrABC system protein B from Neisseria gonorrhoeae.